Reading from the N-terminus, the 87-residue chain is MTEESLIEYPCDFPIKIMGKSQQGFTQSVLSIVKTYAPDFDDTTLEVRSSRNGAYLSLTCTIQATSRTQLDSLYQALHDHPMVTMLL.

The protein belongs to the UPF0250 family.

This Nitrosomonas europaea (strain ATCC 19718 / CIP 103999 / KCTC 2705 / NBRC 14298) protein is UPF0250 protein NE1487.